The primary structure comprises 158 residues: 6,7-dimethyl-8-ribityllumazine synthase (158 aa).

Residues Phe22, 57–59, and 81–83 each bind 5-amino-6-(D-ribitylamino)uracil; these read AFE and AVI. (2S)-2-hydroxy-3-oxobutyl phosphate is bound at residue 86 to 87; it reads GT. His89 serves as the catalytic Proton donor. Phe114 is a 5-amino-6-(D-ribitylamino)uracil binding site. Residue Arg128 coordinates (2S)-2-hydroxy-3-oxobutyl phosphate.

It belongs to the DMRL synthase family. As to quaternary structure, forms an icosahedral capsid composed of 60 subunits, arranged as a dodecamer of pentamers.

The enzyme catalyses (2S)-2-hydroxy-3-oxobutyl phosphate + 5-amino-6-(D-ribitylamino)uracil = 6,7-dimethyl-8-(1-D-ribityl)lumazine + phosphate + 2 H2O + H(+). The protein operates within cofactor biosynthesis; riboflavin biosynthesis; riboflavin from 2-hydroxy-3-oxobutyl phosphate and 5-amino-6-(D-ribitylamino)uracil: step 1/2. In terms of biological role, catalyzes the formation of 6,7-dimethyl-8-ribityllumazine by condensation of 5-amino-6-(D-ribitylamino)uracil with 3,4-dihydroxy-2-butanone 4-phosphate. This is the penultimate step in the biosynthesis of riboflavin. This chain is 6,7-dimethyl-8-ribityllumazine synthase, found in Shewanella amazonensis (strain ATCC BAA-1098 / SB2B).